The sequence spans 349 residues: UDP-3-O-acylglucosamine N-acyltransferase (349 aa).

The active-site Proton acceptor is His-243.

This sequence belongs to the transferase hexapeptide repeat family. LpxD subfamily. As to quaternary structure, homotrimer.

It carries out the reaction a UDP-3-O-[(3R)-3-hydroxyacyl]-alpha-D-glucosamine + a (3R)-hydroxyacyl-[ACP] = a UDP-2-N,3-O-bis[(3R)-3-hydroxyacyl]-alpha-D-glucosamine + holo-[ACP] + H(+). It functions in the pathway bacterial outer membrane biogenesis; LPS lipid A biosynthesis. Catalyzes the N-acylation of UDP-3-O-acylglucosamine using 3-hydroxyacyl-ACP as the acyl donor. Is involved in the biosynthesis of lipid A, a phosphorylated glycolipid that anchors the lipopolysaccharide to the outer membrane of the cell. This is UDP-3-O-acylglucosamine N-acyltransferase from Myxococcus xanthus (strain DK1622).